A 73-amino-acid chain; its full sequence is MKKSLVLKASVAVATLVPMLSFAAEGDDPAKAAFDSLQASATEYIGYAWAMVVVIVGATIGIKLFKKFTSKAS.

The first 23 residues, Met-1–Ala-23, serve as a signal peptide directing secretion. At Ala-24–Tyr-44 the chain is on the periplasmic side. Residues Ile-45–Phe-65 form a helical membrane-spanning segment. The Cytoplasmic portion of the chain corresponds to Lys-66–Ser-73.

It belongs to the inovirus capsid protein family. Homomultimerizes. There are several thousands of this protein in the phage capsid.

It localises to the virion. The protein localises to the host membrane. Its function is as follows. Self assembles to form a helical capsid wrapping up the viral genomic DNA. The capsid displays a filamentous structure with a length of 760-1950 nm and a width of 6-8 nm. The virion assembly and budding take place at the host inner membrane. This Escherichia coli (Bacteriophage f1) protein is Capsid protein G8P (VIII).